Here is a 714-residue protein sequence, read N- to C-terminus: Phosphoribosylformylglycinamidine synthase subunit PurL (714 aa).

His34 is a catalytic residue. An ATP-binding site is contributed by Tyr37. Position 78 (Glu78) interacts with Mg(2+). Substrate is bound by residues 79 to 82 and Arg101; that span reads SHNH. The Proton acceptor role is filled by His80. Mg(2+) is bound at residue Asp102. Position 226 (Gln226) interacts with substrate. Position 254 (Asp254) interacts with Mg(2+). 298-300 serves as a coordination point for substrate; the sequence is ESQ. Residues Asp474 and Gly511 each coordinate ATP. Asn512 contributes to the Mg(2+) binding site. Substrate is bound at residue Ser514.

The protein belongs to the FGAMS family. In terms of assembly, monomer. Part of the FGAM synthase complex composed of 1 PurL, 1 PurQ and 2 PurS subunits.

The protein resides in the cytoplasm. The catalysed reaction is N(2)-formyl-N(1)-(5-phospho-beta-D-ribosyl)glycinamide + L-glutamine + ATP + H2O = 2-formamido-N(1)-(5-O-phospho-beta-D-ribosyl)acetamidine + L-glutamate + ADP + phosphate + H(+). It functions in the pathway purine metabolism; IMP biosynthesis via de novo pathway; 5-amino-1-(5-phospho-D-ribosyl)imidazole from N(2)-formyl-N(1)-(5-phospho-D-ribosyl)glycinamide: step 1/2. In terms of biological role, part of the phosphoribosylformylglycinamidine synthase complex involved in the purines biosynthetic pathway. Catalyzes the ATP-dependent conversion of formylglycinamide ribonucleotide (FGAR) and glutamine to yield formylglycinamidine ribonucleotide (FGAM) and glutamate. The FGAM synthase complex is composed of three subunits. PurQ produces an ammonia molecule by converting glutamine to glutamate. PurL transfers the ammonia molecule to FGAR to form FGAM in an ATP-dependent manner. PurS interacts with PurQ and PurL and is thought to assist in the transfer of the ammonia molecule from PurQ to PurL. The polypeptide is Phosphoribosylformylglycinamidine synthase subunit PurL (Methanothermobacter marburgensis (strain ATCC BAA-927 / DSM 2133 / JCM 14651 / NBRC 100331 / OCM 82 / Marburg) (Methanobacterium thermoautotrophicum)).